Reading from the N-terminus, the 545-residue chain is Lysine--tRNA ligase (545 aa).

A 'HIGH' region motif is present at residues 42–50 (PSGVPHIGH). The short motif at 307-311 (PLSSS) is the 'KMSKS' region element.

This sequence belongs to the class-I aminoacyl-tRNA synthetase family.

The protein localises to the cytoplasm. The catalysed reaction is tRNA(Lys) + L-lysine + ATP = L-lysyl-tRNA(Lys) + AMP + diphosphate. The chain is Lysine--tRNA ligase from Haloarcula marismortui (strain ATCC 43049 / DSM 3752 / JCM 8966 / VKM B-1809) (Halobacterium marismortui).